The sequence spans 243 residues: tRNA (guanine-N(1)-)-methyltransferase (243 aa).

S-adenosyl-L-methionine contacts are provided by residues Gly-108 and 127–132 (LGDYVL).

It belongs to the RNA methyltransferase TrmD family. In terms of assembly, homodimer.

The protein resides in the cytoplasm. The enzyme catalyses guanosine(37) in tRNA + S-adenosyl-L-methionine = N(1)-methylguanosine(37) in tRNA + S-adenosyl-L-homocysteine + H(+). Functionally, specifically methylates guanosine-37 in various tRNAs. The protein is tRNA (guanine-N(1)-)-methyltransferase of Streptococcus gordonii (strain Challis / ATCC 35105 / BCRC 15272 / CH1 / DL1 / V288).